A 197-amino-acid polypeptide reads, in one-letter code: Large ribosomal subunit protein bL25 (197 aa).

The protein belongs to the bacterial ribosomal protein bL25 family. CTC subfamily. As to quaternary structure, part of the 50S ribosomal subunit; part of the 5S rRNA/L5/L18/L25 subcomplex. Contacts the 5S rRNA. Binds to the 5S rRNA independently of L5 and L18.

Its function is as follows. This is one of the proteins that binds to the 5S RNA in the ribosome where it forms part of the central protuberance. The protein is Large ribosomal subunit protein bL25 of Streptomyces avermitilis (strain ATCC 31267 / DSM 46492 / JCM 5070 / NBRC 14893 / NCIMB 12804 / NRRL 8165 / MA-4680).